Here is a 177-residue protein sequence, read N- to C-terminus: Large ribosomal subunit protein uL6 (177 aa).

This sequence belongs to the universal ribosomal protein uL6 family. Part of the 50S ribosomal subunit.

In terms of biological role, this protein binds to the 23S rRNA, and is important in its secondary structure. It is located near the subunit interface in the base of the L7/L12 stalk, and near the tRNA binding site of the peptidyltransferase center. This is Large ribosomal subunit protein uL6 from Pasteurella multocida (strain Pm70).